Here is a 40-residue protein sequence, read N- to C-terminus: RNA replication protein (40 aa).

It belongs to the potexviruses/carlaviruses RNA replication protein family.

The enzyme catalyses RNA(n) + a ribonucleoside 5'-triphosphate = RNA(n+1) + diphosphate. It catalyses the reaction ATP + H2O = ADP + phosphate + H(+). RNA replication. The central part of this protein possibly functions as an ATP-binding helicase. This chain is RNA replication protein, found in Lily symptomless virus (LSV).